The following is a 61-amino-acid chain: Metallothionein-2 (61 aa).

Methionine 1 carries the post-translational modification N-acetylmethionine. A beta region spans residues 1-29; the sequence is MDPNCSCASDGSCSCAGACKCKQCKCTSC. 18 residues coordinate a divalent metal cation: cysteine 5, cysteine 7, cysteine 13, cysteine 15, cysteine 19, cysteine 21, cysteine 24, cysteine 26, cysteine 29, cysteine 33, cysteine 34, cysteine 36, cysteine 37, cysteine 41, cysteine 44, cysteine 48, cysteine 50, and cysteine 57. The tract at residues 30–61 is alpha; that stretch reads KKSCCSCCPVGCAKCSQGCICKEASDKCSCCA. The residue at position 58 (serine 58) is a Phosphoserine. A divalent metal cation contacts are provided by cysteine 59 and cysteine 60.

The protein belongs to the metallothionein superfamily. Type 1 family.

Metallothioneins have a high content of cysteine residues that bind various heavy metals; these proteins are transcriptionally regulated by both heavy metals and glucocorticoids. The protein is Metallothionein-2 (Mt2) of Mus musculus (Mouse).